The sequence spans 158 residues: MSRLPSSFDVEDADVEELSFADKIVYHCKQQPLVPIGTLLTTGAVILAAQNMRIGNRKKTQFYFRWRVGLQAATLAALVAGSFIYGKDKYDQKKKEDQMKEKAKLREQLWIKELERRDAEAQDRKKKAEAARLKTKENEAAIQKLEQELKELEAKASK.

Residues 5-96 (PSSFDVEDAD…KDKYDQKKKE (92 aa)) form the HIG1 domain. 2 helical membrane passes run 32–54 (PLVP…NMRI) and 64–86 (FRWR…FIYG). Residues 99–158 (MKEKAKLREQLWIKELERRDAEAQDRKKKAEAARLKTKENEAAIQKLEQELKELEAKASK) adopt a coiled-coil conformation.

This sequence belongs to the RCF1 family. Associates with the respiratory chain complex III/complex IV supercomplex.

The protein resides in the mitochondrion membrane. Functionally, cytochrome c oxidase subunit which plays a role in assembly of respiratory supercomplexes. This chain is Respiratory supercomplex factor 1, mitochondrial (RCF1), found in Candida glabrata (strain ATCC 2001 / BCRC 20586 / JCM 3761 / NBRC 0622 / NRRL Y-65 / CBS 138) (Yeast).